The primary structure comprises 185 residues: Capsid protein (185 aa).

Residues 136–185 (NAPILSTLPETTVVRRRDRGRSPRRRTPSPRRRRSPSPRRRRSQSRESQC) form a disordered region. The span at 149-178 (VRRRDRGRSPRRRTPSPRRRRSPSPRRRRS) shows a compositional bias: basic residues. A phosphoserine; by host mark is found at Ser157, Ser164, and Ser172. The 1; half-length repeat unit spans residues 157–163 (SPRRRTP). The tract at residues 157–179 (SPRRRTPSPRRRRSPSPRRRRSQ) is 3 X 8 AA repeats of S-P-R-R-R-[PR]-S-Q. The Bipartite nuclear localization signal motif lies at 160–177 (RRTPSPRRRRSPSPRRRR). Repeat copies occupy residues 164 to 171 (SPRRRRSP) and 172 to 179 (SPRRRRSQ). An RNA binding region spans residues 179-185 (QSRESQC).

The protein belongs to the orthohepadnavirus core antigen family. Homodimerizes, then multimerizes. Interacts with cytosol exposed regions of viral L glycoprotein present in the reticulum-to-Golgi compartment. Interacts with human FLNB. Phosphorylated form interacts with host importin alpha; this interaction depends on the exposure of the NLS, which itself depends upon genome maturation and/or phosphorylation of the capsid protein. Interacts with host NUP153. Post-translationally, phosphorylated by host SRPK1, SRPK2, and maybe protein kinase C or GAPDH. Phosphorylation is critical for pregenomic RNA packaging. Protein kinase C phosphorylation is stimulated by HBx protein and may play a role in transport of the viral genome to the nucleus at the late step during the viral replication cycle.

It is found in the virion. Its subcellular location is the host cytoplasm. In terms of biological role, self assembles to form an icosahedral capsid. Most capsids appear to be large particles with an icosahedral symmetry of T=4 and consist of 240 copies of capsid protein, though a fraction forms smaller T=3 particles consisting of 180 capsid proteins. Entering capsids are transported along microtubules to the nucleus. Phosphorylation of the capsid is thought to induce exposure of nuclear localization signal in the C-terminal portion of the capsid protein that allows binding to the nuclear pore complex via the importin (karyopherin-) alpha and beta. Capsids are imported in intact form through the nuclear pore into the nuclear basket, where it probably binds NUP153. Only capsids that contain the mature viral genome can release the viral DNA and capsid protein into the nucleoplasm. Immature capsids get stuck in the basket. Capsids encapsulate the pre-genomic RNA and the P protein. Pre-genomic RNA is reverse-transcribed into DNA while the capsid is still in the cytoplasm. The capsid can then either be directed to the nucleus, providing more genomes for transcription, or bud through the endoplasmic reticulum to provide new virions. This chain is Capsid protein, found in Hepatitis B virus genotype A2 subtype adw2 (strain Rutter 1979) (HBV-A).